The sequence spans 595 residues: Elongation factor 4 (595 aa).

The region spanning 2–184 (SHIRNFSIIA…RLVATIPPPT (183 aa)) is the tr-type G domain. Residues 14-19 (DHGKST) and 131-134 (NKMD) each bind GTP.

This sequence belongs to the TRAFAC class translation factor GTPase superfamily. Classic translation factor GTPase family. LepA subfamily.

It localises to the cell inner membrane. It catalyses the reaction GTP + H2O = GDP + phosphate + H(+). In terms of biological role, required for accurate and efficient protein synthesis under certain stress conditions. May act as a fidelity factor of the translation reaction, by catalyzing a one-codon backward translocation of tRNAs on improperly translocated ribosomes. Back-translocation proceeds from a post-translocation (POST) complex to a pre-translocation (PRE) complex, thus giving elongation factor G a second chance to translocate the tRNAs correctly. Binds to ribosomes in a GTP-dependent manner. This Pseudomonas syringae pv. tomato (strain ATCC BAA-871 / DC3000) protein is Elongation factor 4.